Consider the following 130-residue polypeptide: Phosphoribosyl-AMP cyclohydrolase (130 aa).

Asp-74 is a binding site for Mg(2+). Residue Cys-75 coordinates Zn(2+). Residues Asp-76 and Asp-78 each contribute to the Mg(2+) site. The Zn(2+) site is built by Cys-91 and Cys-98.

This sequence belongs to the PRA-CH family. Homodimer. It depends on Mg(2+) as a cofactor. Zn(2+) serves as cofactor.

The protein resides in the cytoplasm. The catalysed reaction is 1-(5-phospho-beta-D-ribosyl)-5'-AMP + H2O = 1-(5-phospho-beta-D-ribosyl)-5-[(5-phospho-beta-D-ribosylamino)methylideneamino]imidazole-4-carboxamide. It functions in the pathway amino-acid biosynthesis; L-histidine biosynthesis; L-histidine from 5-phospho-alpha-D-ribose 1-diphosphate: step 3/9. Catalyzes the hydrolysis of the adenine ring of phosphoribosyl-AMP. The chain is Phosphoribosyl-AMP cyclohydrolase from Bradyrhizobium sp. (strain ORS 278).